The chain runs to 189 residues: Elongation factor P (189 aa).

N6-(3,6-diaminohexanoyl)-5-hydroxylysine is present on K34.

The protein belongs to the elongation factor P family. In terms of processing, may be beta-lysylated on the epsilon-amino group of Lys-34 by the combined action of EpmA and EpmB, and then hydroxylated on the C5 position of the same residue by EpmC (if this protein is present). Lysylation is critical for the stimulatory effect of EF-P on peptide-bond formation. The lysylation moiety may extend toward the peptidyltransferase center and stabilize the terminal 3-CCA end of the tRNA. Hydroxylation of the C5 position on Lys-34 may allow additional potential stabilizing hydrogen-bond interactions with the P-tRNA.

The protein resides in the cytoplasm. The protein operates within protein biosynthesis; polypeptide chain elongation. In terms of biological role, involved in peptide bond synthesis. Alleviates ribosome stalling that occurs when 3 or more consecutive Pro residues or the sequence PPG is present in a protein, possibly by augmenting the peptidyl transferase activity of the ribosome. Modification of Lys-34 is required for alleviation. In Alcanivorax borkumensis (strain ATCC 700651 / DSM 11573 / NCIMB 13689 / SK2), this protein is Elongation factor P.